A 530-amino-acid chain; its full sequence is Glutamate--tRNA ligase (530 aa).

The 'HIGH' region signature appears at 26-36 (PSPTGKAHIGT). The 'KMSKS' region motif lies at 267-271 (KLSKR). An ATP-binding site is contributed by K270.

This sequence belongs to the class-I aminoacyl-tRNA synthetase family. Glutamate--tRNA ligase type 1 subfamily. As to quaternary structure, monomer.

The protein resides in the cytoplasm. It carries out the reaction tRNA(Glu) + L-glutamate + ATP = L-glutamyl-tRNA(Glu) + AMP + diphosphate. In terms of biological role, catalyzes the attachment of glutamate to tRNA(Glu) in a two-step reaction: glutamate is first activated by ATP to form Glu-AMP and then transferred to the acceptor end of tRNA(Glu). The polypeptide is Glutamate--tRNA ligase (Gloeobacter violaceus (strain ATCC 29082 / PCC 7421)).